A 1093-amino-acid chain; its full sequence is Semaphorin-5B (1093 aa).

Positions 1–19 are cleaved as a signal peptide; the sequence is MVVPGPLALSLLLSSLTLL. The Extracellular portion of the chain corresponds to 20 to 978; that stretch reads VSHLSSSQDI…TSCGGFNLIH (959 aa). The Sema domain occupies 45–495; that stretch reads HPIVAFEDLK…LSDRVLRVPL (451 aa). N-linked (GlcNAc...) asparagine glycosylation is found at Asn-59 and Asn-95. 2 cysteine pairs are disulfide-bonded: Cys-114–Cys-124 and Cys-141–Cys-150. Residues Asn-157, Asn-178, and Asn-287 are each glycosylated (N-linked (GlcNAc...) asparagine). Disulfide bonds link Cys-264-Cys-367 and Cys-288-Cys-330. Residues Asn-333, Asn-378, Asn-532, Asn-539, Asn-547, and Asn-602 are each glycosylated (N-linked (GlcNAc...) asparagine). 7 consecutive TSP type-1 domains span residues 551-605, 606-662, 664-713, 721-776, 795-850, 852-907, and 908-952; these read DGGF…NCSR, NGAW…TPCP, PIFW…EACP, WTPW…ACDT, NGGW…QACP, RGAW…QACP, and EGWS…RPCP. Cystine bridges form between Cys-618–Cys-655, Cys-622–Cys-661, Cys-633–Cys-645, Cys-676–Cys-707, Cys-680–Cys-712, and Cys-691–Cys-697. N-linked (GlcNAc...) asparagine glycosylation is present at Asn-728. Disulfide bonds link Cys-807-Cys-844, Cys-811-Cys-849, Cys-822-Cys-834, Cys-864-Cys-901, Cys-868-Cys-906, and Cys-879-Cys-891. The N-linked (GlcNAc...) asparagine glycan is linked to Asn-944. A helical transmembrane segment spans residues 979 to 999; the sequence is LIVTGVSCFLVSGLLTLAVYL. Over 1000–1093 the chain is Cytoplasmic; the sequence is SCQHCQRQSQ…SPGQRCFPNS (94 aa).

This sequence belongs to the semaphorin family. In adult, only detected in brain.

The protein localises to the membrane. In terms of biological role, may act as a positive axonal guidance cue. The polypeptide is Semaphorin-5B (Sema5b) (Mus musculus (Mouse)).